Here is a 360-residue protein sequence, read N- to C-terminus: Phospho-N-acetylmuramoyl-pentapeptide-transferase (360 aa).

10 helical membrane passes run 24–44 (RAVM…PWTI), 69–89 (GTPT…TLLW), 92–112 (WANP…ALGF), 133–153 (MVWQ…LAAN), 158–178 (ILIV…GFLV), 199–219 (GLAT…AYAS), 239–259 (VVIF…FNAY), 263–283 (VFMG…VAVI), 288–308 (FVLV…MLQV), and 337–357 (QVVV…LSTL).

Belongs to the glycosyltransferase 4 family. MraY subfamily. Mg(2+) serves as cofactor.

The protein resides in the cell inner membrane. It carries out the reaction UDP-N-acetyl-alpha-D-muramoyl-L-alanyl-gamma-D-glutamyl-meso-2,6-diaminopimeloyl-D-alanyl-D-alanine + di-trans,octa-cis-undecaprenyl phosphate = di-trans,octa-cis-undecaprenyl diphospho-N-acetyl-alpha-D-muramoyl-L-alanyl-D-glutamyl-meso-2,6-diaminopimeloyl-D-alanyl-D-alanine + UMP. Its pathway is cell wall biogenesis; peptidoglycan biosynthesis. Functionally, catalyzes the initial step of the lipid cycle reactions in the biosynthesis of the cell wall peptidoglycan: transfers peptidoglycan precursor phospho-MurNAc-pentapeptide from UDP-MurNAc-pentapeptide onto the lipid carrier undecaprenyl phosphate, yielding undecaprenyl-pyrophosphoryl-MurNAc-pentapeptide, known as lipid I. This chain is Phospho-N-acetylmuramoyl-pentapeptide-transferase, found in Neisseria meningitidis serogroup C / serotype 2a (strain ATCC 700532 / DSM 15464 / FAM18).